The following is a 287-amino-acid chain: ATP synthase gamma chain (287 aa).

It belongs to the ATPase gamma chain family. As to quaternary structure, F-type ATPases have 2 components, CF(1) - the catalytic core - and CF(0) - the membrane proton channel. CF(1) has five subunits: alpha(3), beta(3), gamma(1), delta(1), epsilon(1). CF(0) has three main subunits: a, b and c.

Its subcellular location is the cell inner membrane. Its function is as follows. Produces ATP from ADP in the presence of a proton gradient across the membrane. The gamma chain is believed to be important in regulating ATPase activity and the flow of protons through the CF(0) complex. The chain is ATP synthase gamma chain from Salmonella agona (strain SL483).